A 367-amino-acid polypeptide reads, in one-letter code: DNA replication and repair protein RecF (367 aa).

Position 30–37 (30–37) interacts with ATP; that stretch reads GNNGEGKT.

This sequence belongs to the RecF family.

It localises to the cytoplasm. Its function is as follows. The RecF protein is involved in DNA metabolism; it is required for DNA replication and normal SOS inducibility. RecF binds preferentially to single-stranded, linear DNA. It also seems to bind ATP. In Leptospira biflexa serovar Patoc (strain Patoc 1 / Ames), this protein is DNA replication and repair protein RecF.